The chain runs to 111 residues: T cell receptor alpha variable 18 (111 aa).

Positions M1 to G20 are cleaved as a signal peptide. An Ig-like domain is found at D21 to R111. The N-linked (GlcNAc...) asparagine glycan is linked to N41. Residues C42 and C108 are joined by a disulfide bond.

In terms of assembly, alpha-beta TR is a heterodimer composed of an alpha and beta chain; disulfide-linked. The alpha-beta TR is associated with the transmembrane signaling CD3 coreceptor proteins to form the TR-CD3 (TcR or TCR). The assembly of alpha-beta TR heterodimers with CD3 occurs in the endoplasmic reticulum where a single alpha-beta TR heterodimer associates with one CD3D-CD3E heterodimer, one CD3G-CD3E heterodimer and one CD247 homodimer forming a stable octameric structure. CD3D-CD3E and CD3G-CD3E heterodimers preferentially associate with TR alpha and TR beta chains, respectively. The association of the CD247 homodimer is the last step of TcR assembly in the endoplasmic reticulum and is required for transport to the cell surface.

Its subcellular location is the cell membrane. Its function is as follows. V region of the variable domain of T cell receptor (TR) alpha chain that participates in the antigen recognition. Alpha-beta T cell receptors are antigen specific receptors which are essential to the immune response and are present on the cell surface of T lymphocytes. Recognize peptide-major histocompatibility (MH) (pMH) complexes that are displayed by antigen presenting cells (APC), a prerequisite for efficient T cell adaptive immunity against pathogens. Binding of alpha-beta TR to pMH complex initiates TR-CD3 clustering on the cell surface and intracellular activation of LCK that phosphorylates the ITAM motifs of CD3G, CD3D, CD3E and CD247 enabling the recruitment of ZAP70. In turn ZAP70 phosphorylates LAT, which recruits numerous signaling molecules to form the LAT signalosome. The LAT signalosome propagates signal branching to three major signaling pathways, the calcium, the mitogen-activated protein kinase (MAPK) kinase and the nuclear factor NF-kappa-B (NF-kB) pathways, leading to the mobilization of transcription factors that are critical for gene expression and essential for T cell growth and differentiation. The T cell repertoire is generated in the thymus, by V-(D)-J rearrangement. This repertoire is then shaped by intrathymic selection events to generate a peripheral T cell pool of self-MH restricted, non-autoaggressive T cells. Post-thymic interaction of alpha-beta TR with the pMH complexes shapes TR structural and functional avidity. The protein is T cell receptor alpha variable 18 of Homo sapiens (Human).